The following is a 399-amino-acid chain: Ribonuclease D (399 aa).

The 3'-5' exonuclease domain occupies 31–197 (RVVTDNTALL…PLYHILEKEL (167 aa)). Positions 239 to 318 (NPLELSRLRV…SQARRISSND (80 aa)) constitute an HRDC domain.

It belongs to the RNase D family. A divalent metal cation serves as cofactor.

It is found in the cytoplasm. It carries out the reaction Exonucleolytic cleavage that removes extra residues from the 3'-terminus of tRNA to produce 5'-mononucleotides.. Exonuclease involved in the 3' processing of various precursor tRNAs. Initiates hydrolysis at the 3'-terminus of an RNA molecule and releases 5'-mononucleotides. The polypeptide is Ribonuclease D (Haemophilus influenzae (strain ATCC 51907 / DSM 11121 / KW20 / Rd)).